The following is a 382-amino-acid chain: G-box-binding factor 3 (382 aa).

The span at 1–16 (MGNSSEEPKPPTKSDK) shows a compositional bias: basic and acidic residues. 3 disordered regions span residues 1–26 (MGNS…DQTN), 97–221 (MGSL…GVKL), and 257–285 (EREL…AETE). Residues 111-130 (TPGTLLSIDTPTKSTGNTDN) show a composition bias toward polar residues. Basic and acidic residues predominate over residues 155–165 (ADEHKRSRNSS). Positions 166 to 181 (ETDGSTDGSDGNTTGA) are enriched in low complexity. Over residues 182–199 (DEPKLKRSREGTPTKDGK) the composition is skewed to basic and acidic residues. Positions 202–216 (VQASSFHSVSPSSGD) are enriched in polar residues. The 64-residue stretch at 259-322 (ELKRERRKQS…DKLRGANATL (64 aa)) folds into the bZIP domain. Positions 261–280 (KRERRKQSNRESARRSRLRK) are basic motif. Positions 287 to 322 (LARKVEALTAENMALRSELNQLNEKSDKLRGANATL) are leucine-zipper. The tract at residues 329-382 (SEPEKRVPANMLSRVKNSGAGDKNKNQGDNDSNSTSKLHQLLDTKPRAKAVAAG) is disordered. Residues 357-366 (DNDSNSTSKL) are compositionally biased toward polar residues.

It belongs to the bZIP family. In terms of assembly, DNA-binding heterodimer. Interacts with GBF4. Interacts with BZIP16 and BZIP68. In terms of tissue distribution, present only in dark grown leaves and roots.

Its subcellular location is the nucleus. Functionally, binds to the G-box motif (5'-CCACGTGG-3') of the rbcS-1A gene promoter. G-box and G-box-like motifs are cis-acting elements defined in promoters of certain plant genes which are regulated by such diverse stimuli as light-induction or hormone control. The polypeptide is G-box-binding factor 3 (GBF3) (Arabidopsis thaliana (Mouse-ear cress)).